Reading from the N-terminus, the 407-residue chain is Expansin-like protein 2 (407 aa).

Positions 1–23 (MKMKNFLSKSLLVLLIGLIGVKS) are cleaved as a signal peptide. An Expansin-like EG45 domain is found at 42–141 (HGNCGYEQLT…KKVSCDVTGN (100 aa)). 2 disulfide bridges follow: Cys45–Cys75 and Cys78–Cys136. N-linked (GlcNAc...) asparagine glycans are attached at residues Asn70, Asn117, and Asn387.

Belongs to the expansin family. Expansin A subfamily.

It localises to the secreted. Functionally, unlikely to encode with a protein with expansin activity. The protein is Expansin-like protein 2 (expl2) of Dictyostelium discoideum (Social amoeba).